Here is a 199-residue protein sequence, read N- to C-terminus: Putative pseudouridine methyltransferase (199 aa).

S-adenosyl-L-methionine-binding residues include Leu132 and Cys186.

Belongs to the methyltransferase superfamily. TrmY family.

Its subcellular location is the cytoplasm. In Vibrio parahaemolyticus serotype O3:K6 (strain RIMD 2210633), this protein is Putative pseudouridine methyltransferase.